Reading from the N-terminus, the 261-residue chain is Cytochrome c oxidase subunit 3 (261 aa).

The Mitochondrial matrix portion of the chain corresponds to 1–15 (MTHQTHAYHMVNPSP). A helical membrane pass occupies residues 16–34 (WPLTGALSALLMTSGLIMW). Topologically, residues 35–40 (FHYNSM) are mitochondrial intermembrane. The helical transmembrane segment at 41–66 (ALLTLGFTTNLLTMYQWWRDVIREGT) threads the bilayer. The Mitochondrial matrix segment spans residues 67 to 72 (FQGHHT). A helical membrane pass occupies residues 73 to 105 (PIVQKGLRYGMVLFIVSEVFFFAGFFWAFYHSS). Residues 106-128 (LAPTPELGGCWPPTGIIPLNPLE) lie on the Mitochondrial intermembrane side of the membrane. The helical transmembrane segment at 129–152 (VPLLNTSVLLASGVSITWAHHSLM) threads the bilayer. At 153 to 155 (EGN) the chain is on the mitochondrial matrix side. Residues 156–183 (RKHMLQALFITISLGVYFTLLQASEYYE) form a helical membrane-spanning segment. Residues 184-190 (TSFTISD) are Mitochondrial intermembrane-facing. Residues 191-223 (GVYGSTFFMATGFHGLHVIIGSTFLIVCFLRQL) form a helical membrane-spanning segment. Residues 224–232 (YYHFTSNHH) are Mitochondrial matrix-facing. Residues 233-256 (FGFEAAAWYWHFVDVVWLFLYVSI) traverse the membrane as a helical segment. The Mitochondrial intermembrane portion of the chain corresponds to 257–261 (YWWGS).

The protein belongs to the cytochrome c oxidase subunit 3 family. Component of the cytochrome c oxidase (complex IV, CIV), a multisubunit enzyme composed of 14 subunits. The complex is composed of a catalytic core of 3 subunits MT-CO1, MT-CO2 and MT-CO3, encoded in the mitochondrial DNA, and 11 supernumerary subunits COX4I, COX5A, COX5B, COX6A, COX6B, COX6C, COX7A, COX7B, COX7C, COX8 and NDUFA4, which are encoded in the nuclear genome. The complex exists as a monomer or a dimer and forms supercomplexes (SCs) in the inner mitochondrial membrane with NADH-ubiquinone oxidoreductase (complex I, CI) and ubiquinol-cytochrome c oxidoreductase (cytochrome b-c1 complex, complex III, CIII), resulting in different assemblies (supercomplex SCI(1)III(2)IV(1) and megacomplex MCI(2)III(2)IV(2)).

It localises to the mitochondrion inner membrane. The enzyme catalyses 4 Fe(II)-[cytochrome c] + O2 + 8 H(+)(in) = 4 Fe(III)-[cytochrome c] + 2 H2O + 4 H(+)(out). Its function is as follows. Component of the cytochrome c oxidase, the last enzyme in the mitochondrial electron transport chain which drives oxidative phosphorylation. The respiratory chain contains 3 multisubunit complexes succinate dehydrogenase (complex II, CII), ubiquinol-cytochrome c oxidoreductase (cytochrome b-c1 complex, complex III, CIII) and cytochrome c oxidase (complex IV, CIV), that cooperate to transfer electrons derived from NADH and succinate to molecular oxygen, creating an electrochemical gradient over the inner membrane that drives transmembrane transport and the ATP synthase. Cytochrome c oxidase is the component of the respiratory chain that catalyzes the reduction of oxygen to water. Electrons originating from reduced cytochrome c in the intermembrane space (IMS) are transferred via the dinuclear copper A center (CU(A)) of subunit 2 and heme A of subunit 1 to the active site in subunit 1, a binuclear center (BNC) formed by heme A3 and copper B (CU(B)). The BNC reduces molecular oxygen to 2 water molecules using 4 electrons from cytochrome c in the IMS and 4 protons from the mitochondrial matrix. This Canis lupus familiaris (Dog) protein is Cytochrome c oxidase subunit 3 (MT-CO3).